We begin with the raw amino-acid sequence, 316 residues long: Ribosomal RNA small subunit methyltransferase H (316 aa).

S-adenosyl-L-methionine contacts are provided by residues glycine 35–histidine 37, aspartate 55, phenylalanine 79, aspartate 101, and glutamine 108.

Belongs to the methyltransferase superfamily. RsmH family.

The protein localises to the cytoplasm. It carries out the reaction cytidine(1402) in 16S rRNA + S-adenosyl-L-methionine = N(4)-methylcytidine(1402) in 16S rRNA + S-adenosyl-L-homocysteine + H(+). Functionally, specifically methylates the N4 position of cytidine in position 1402 (C1402) of 16S rRNA. The chain is Ribosomal RNA small subunit methyltransferase H from Vibrio parahaemolyticus serotype O3:K6 (strain RIMD 2210633).